The sequence spans 3132 residues: Enniatin synthetase (3132 aa).

Positions 53 to 466 (ADDKQRAVGH…VEKVDMMTQE (414 aa)) are condensation 1. The interval 186 to 212 (NDEHPRQFETPDSSQATPEEDLQPNPS) is disordered. The segment at 495 to 887 (SQSPNKAAVA…GRMDSQVKIR (393 aa)) is adenylation 1. The tract at residues 994-1013 (SQKTHSTPSQQSQAAISSGT) is disordered. The Carrier 1 domain occupies 1010-1086 (SSGTDTETKL…GLKAIVIGTS (77 aa)). An O-(pantetheine 4'-phosphoryl)serine modification is found at serine 1047. The segment at 1105 to 1534 (SYAQNRMWFL…ETCISVLPLT (430 aa)) is condensation 2. Residues 1563 to 1960 (FREQAAANPE…GRMDNQFKIR (398 aa)) are adenylation 2. Residues 2021–2177 (EGWQDHFESG…YLAEVIDGLI (157 aa)) are S-adenosyl-L-methionine-dependent N-methyltransferase. 2 consecutive Carrier domains span residues 2504–2578 (FPIS…RQGL) and 2598–2672 (APRT…ESSH). Serine 2538 and serine 2632 each carry O-(pantetheine 4'-phosphoryl)serine. The interval 2719–3124 (QDVYPSTQMQ…RHVLEEVCKT (406 aa)) is condensation 3.

The protein belongs to the NRP synthetase family. The cofactor is pantetheine 4'-phosphate.

It functions in the pathway antibiotic biosynthesis; enniatin biosynthesis. Nonribosomal peptide synthetase that synthesizes enniatin by coupling three D-hydroxycarboxylic acids and three L-amino acids via amide and ester bonds in an alternating fashion. Whereas ESYN1 can accept different amino acids as precursors (L-valine, L-isoleucine or L-leucine), only one species of D-hydroxycarboxylic acid can be found in natural enniatin isolates (D-hydroxyisovaleric acid, D-Hiv). D-Hiv stems from L-valine deanimation by a valine aminotransferase to 2-keto-isovaleric acid (2-Kiv), which becomes subsequently reduced by a keto-isovaleric acid reductase (KivR) to D-Hiv. The chain is Enniatin synthetase from Fusarium oxysporum (Fusarium vascular wilt).